Here is a 248-residue protein sequence, read N- to C-terminus: Pulmonary surfactant-associated protein A (248 aa).

An N-terminal signal peptide occupies residues 1 to 20; sequence MWLCPLALTLTLMAASGAAC. The 70-residue stretch at 31 to 100 folds into the Collagen-like domain; it reads GIPGTPGSHG…PGERGPPGLP (70 aa). Residues 33 to 100 are disordered; the sequence is PGTPGSHGLP…PGERGPPGLP (68 aa). The span at 42 to 51 shows a compositional bias: basic and acidic residues; the sequence is PGRDGRDGVK. Positions 54–65 are enriched in pro residues; it reads PGPPGPMGPPGD. One can recognise a C-type lectin domain in the interval 134 to 247; that stretch reads IGGKVFSTNG…CLYNRLTICE (114 aa). Cystine bridges form between cysteine 155/cysteine 246 and cysteine 224/cysteine 238. Asparagine 207 carries an N-linked (GlcNAc...) asparagine glycan. The Ca(2+) site is built by glutamate 215, alanine 217, asparagine 234, and aspartate 235.

It belongs to the SFTPA family. Oligomeric complex of 6 set of homotrimers.

Its subcellular location is the secreted. It is found in the extracellular space. It localises to the extracellular matrix. The protein resides in the surface film. Its function is as follows. In presence of calcium ions, it binds to surfactant phospholipids and contributes to lower the surface tension at the air-liquid interface in the alveoli of the mammalian lung and is essential for normal respiration. Enhances the expression of MYO18A/SP-R210 on alveolar macrophages. The chain is Pulmonary surfactant-associated protein A (SFTPA1) from Macaca mulatta (Rhesus macaque).